Reading from the N-terminus, the 109-residue chain is N-alpha-acetyltransferase 38, NatC auxiliary subunit (109 aa).

The 79-residue stretch at 23–101 folds into the Sm domain; that stretch reads LARCKLENLL…VVSIEVETES (79 aa).

This sequence belongs to the snRNP Sm proteins family. In terms of assembly, component of the N-terminal acetyltransferase C (NatC) complex.

The protein localises to the cytoplasm. It is found in the nucleus. In terms of biological role, auxillary component of the N-terminal acetyltransferase C (NatC) complex which catalyzes acetylation of N-terminal methionine residues. N-terminal acetylation protects proteins from ubiquitination and degradation by the N-end rule pathway. This chain is N-alpha-acetyltransferase 38, NatC auxiliary subunit (naa38), found in Danio rerio (Zebrafish).